The sequence spans 378 residues: Signal peptide peptidase (378 aa).

The disordered stretch occupies residues 1–27 (MDSAVSDPHNGSAEAGTPANGTTRPPS). Topologically, residues 1 to 31 (MDSAVSDPHNGSAEAGTPANGTTRPPSTPEG) are lumenal. Residues N10 and N20 are each glycosylated (N-linked (GlcNAc...) asparagine). The chain crosses the membrane as a helical span at residues 32–52 (IALAYGSLLLMALLPIFFGAL). At 53–77 (RSVRCARGKSSSDMPETITSRDAAR) the chain is on the cytoplasmic side. Residues 78 to 98 (FPIIASCTLLGLYLFFKIFSQ) traverse the membrane as a helical segment. The Lumenal segment spans residues 99–100 (EY). Residues 101-121 (INLLLSMYFFVLGILALSHTI) traverse the membrane as a helical segment. Residues 122-157 (SPFMNKFFPANFPNRQYQLLFTQGSGENKEEIINYE) are Cytoplasmic-facing. Residues 158–178 (FDTKDLVCLGLSSVVGVWYLL) traverse the membrane as a helical segment. The Lumenal segment spans residues 179–181 (RKH). A helical membrane pass occupies residues 182–202 (WIANNLFGLAFSLNGVELLHL). The Cytoplasmic segment spans residues 203 to 209 (NNVSTGC). The helical transmembrane segment at 210–230 (ILLGGLFIYDIFWVFGTNVMV) threads the bilayer. D219 is a catalytic residue. Residues 231–256 (TVAKSFEAPIKLVFPQDLLEKGLEAD) lie on the Lumenal side of the membrane. Residues 257–277 (NFAMLGLGDIVIPGIFIALLL) traverse the membrane as a helical segment. Residue D265 is part of the active site. Residues 278 to 290 (RFDISLKKNTHTY) lie on the Cytoplasmic side of the membrane. A helical transmembrane segment spans residues 291–311 (FYTSFAAYIFGLGLTIFIMHI). Residues 312 to 314 (FKH) lie on the Lumenal side of the membrane. The helical transmembrane segment at 315–335 (AQPALLYLVPACIGFPVLVAL) threads the bilayer. The short motif at 317-319 (PAL) is the PAL element. Residues 336–378 (AKGEVAEMFSYEESNPKDPAAETESKEESTEASASKRLEKKEK) are Cytoplasmic-facing. Residues 346 to 378 (YEESNPKDPAAETESKEESTEASASKRLEKKEK) are disordered. Over residues 349 to 378 (SNPKDPAAETESKEESTEASASKRLEKKEK) the composition is skewed to basic and acidic residues. Phosphoserine is present on S368.

Belongs to the peptidase A22B family. Monomer. Homodimer. Interacts with RNF139. Interacts with DERL1 and XBP1 isoform 1. Widely expressed with highest levels in liver and kidney. In the brain, expressed predominantly in hippocampus, amygdala, piriform cortex, choroid plexus and arcuate nucleus of the hypothalamic area. Isoform 1 is more strongly expressed than isoform 4 in most tissues except brain and skeletal muscle where isoform 4 is the dominant isoform and in testis where isoform 1 and isoform 4 are expressed at similar levels. In the brain, isoform 4 is not detected in the choroid plexus.

The protein localises to the endoplasmic reticulum membrane. It is found in the membrane. It localises to the cell membrane. Its function is as follows. Catalyzes intramembrane proteolysis of signal peptides that have been removed from precursors of secretory and membrane proteins, resulting in the release of the fragment from the ER membrane into the cytoplasm. Required to generate lymphocyte cell surface (HLA-E) epitopes derived from MHC class I signal peptides. Involved in the intramembrane cleavage of the integral membrane protein PSEN1. Cleaves the integral membrane protein XBP1 isoform 1 in a DERL1/RNF139-dependent manner. May play a role in graft rejection. The polypeptide is Signal peptide peptidase (Mus musculus (Mouse)).